Here is a 214-residue protein sequence, read N- to C-terminus: Adenylate kinase (214 aa).

10–15 serves as a coordination point for ATP; sequence GAGKGT. Residues 30–59 form an NMP region; that stretch reads STGDMLRAAVKAGTPLGLEAKKVMDAGQLV. AMP contacts are provided by residues threonine 31, arginine 36, 57–59, 85–88, and glutamine 92; these read QLV and GFPR. The interval 122-159 is LID; it reads GRRVHPGSGRVYHVVFNPPKVEGKDDVTGEDLAIRPDD. ATP is bound by residues arginine 123 and 132–133; that span reads VY. 2 residues coordinate AMP: arginine 156 and arginine 167. Glutamine 200 is a binding site for ATP.

Belongs to the adenylate kinase family. Monomer.

Its subcellular location is the cytoplasm. The enzyme catalyses AMP + ATP = 2 ADP. It functions in the pathway purine metabolism; AMP biosynthesis via salvage pathway; AMP from ADP: step 1/1. Its function is as follows. Catalyzes the reversible transfer of the terminal phosphate group between ATP and AMP. Plays an important role in cellular energy homeostasis and in adenine nucleotide metabolism. This is Adenylate kinase from Shewanella sp. (strain ANA-3).